Consider the following 538-residue polypeptide: Sterol esterase 2 (538 aa).

The Cytoplasmic segment spans residues 1–11 (MVNKVVDEVQR). Residues 12–32 (LVSAIILTSFMTGLFILSLWK) traverse the membrane as a helical; Signal-anchor for type II membrane protein segment. At 33-538 (NYVTVHFQHK…IENLRFPNAR (506 aa)) the chain is on the lumenal side. The disordered stretch occupies residues 42–87 (KNDPRDTRSSRTKIQPNDKKKKRPARHSRPLSISSTTPLDLQRDQE). The segment covering 60–70 (KKKKRPARHSR) has biased composition (basic residues). Serine 73 and serine 107 each carry phosphoserine. The Nucleophile role is filled by serine 287. Residues aspartate 480 and histidine 511 each act as charge relay system in the active site.

Belongs to the AB hydrolase superfamily. Post-translationally, not glycosylated.

The protein resides in the cell membrane. The catalysed reaction is a sterol ester + H2O = a sterol + a fatty acid + H(+). Its function is as follows. Mediates the hydrolysis of steryl esters. Required for mobilization of steryl ester, thereby playing a central role in lipid metabolism. The chain is Sterol esterase 2 (YEH2) from Saccharomyces cerevisiae (strain ATCC 204508 / S288c) (Baker's yeast).